Here is a 540-residue protein sequence, read N- to C-terminus: MRVNNGLTPQELEAYGISDVHDIVYNPSYDLLYQEELDPSLTGYERGVLTNLGAVAVDTGIFTGRSPKDKYIVRDDTTRDTFWWADKGKGKNDNKPLSPETWQHLKGLVTKQLSGKRLFVVDAFCGANPDTRLSVRFITEVAWQAHFVKNMFIRPSDEELAGFKPDFIVMNGAKCTNPQWKEQGLNSENFVAFNLTERMQLIGGTWYGGEMKKGMFSMMNYLLPLKGIASMHCSANVGEKGDVAVFFGLSGTGKTTLSTDPKRRLIGDDEHGWDDDGVFNFEGGCYAKTIKLSKEAEPEIYNAIRRDALLENVTVREDGTIDFDDGSKTENTRVSYPIYHIDNIVKPVSKAGHATKVIFLTADAFGVLPPVSRLTADQTQYHFLSGFTAKLAGTERGITEPTPTFSACFGAAFLSLHPTQYAEVLVKRMQAAGAQAYLVNTGWNGTGKRISIKDTRAIIDAILNGSLDNAETFTLPMFNLAIPTELPGVDTKILDPRNTYASPEQWQEKAETLAKLFIDNFDKYTDTPAGAALVAAGPKL.

Substrate is bound at residue Arg65. Residue Lys87 is modified to N6-acetyllysine. Substrate-binding residues include Tyr207 and Lys213. Residues Lys213, His232, and 248–256 (GLSGTGKTT) each bind ATP. Positions 213 and 232 each coordinate Mn(2+). A Mn(2+)-binding site is contributed by Asp269. Residues Glu297, Arg333, 449 to 450 (RI), and Thr455 contribute to the ATP site. Arg333 is a substrate binding site. Position 523 is an N6-acetyllysine (Lys523).

Belongs to the phosphoenolpyruvate carboxykinase (ATP) family. In terms of assembly, monomer. Mn(2+) serves as cofactor.

The protein localises to the cytoplasm. The enzyme catalyses oxaloacetate + ATP = phosphoenolpyruvate + ADP + CO2. Its pathway is carbohydrate biosynthesis; gluconeogenesis. Involved in the gluconeogenesis. Catalyzes the conversion of oxaloacetate (OAA) to phosphoenolpyruvate (PEP) through direct phosphoryl transfer between the nucleoside triphosphate and OAA. The polypeptide is Phosphoenolpyruvate carboxykinase (ATP) (Escherichia coli O6:K15:H31 (strain 536 / UPEC)).